Reading from the N-terminus, the 1128-residue chain is Exportin-6 (1128 aa).

An Importin N-terminal domain is found at 31 to 97; the sequence is IEELLNSFAG…RSCLPKLLLS (67 aa).

Belongs to the exportin family.

It localises to the nucleus. The protein resides in the cytoplasm. Mediates the nuclear export of actin and profilin-actin complexes in somatic cells. The polypeptide is Exportin-6 (xpo6) (Danio rerio (Zebrafish)).